We begin with the raw amino-acid sequence, 403 residues long: D-mannonate dehydratase (403 aa).

Substrate-binding residues include N38 and H123. Y160 (proton donor/acceptor) is an active-site residue. D211 lines the Mg(2+) pocket. H213 (proton donor/acceptor) is an active-site residue. E237 and E263 together coordinate Mg(2+). E263, R284, H313, D317, and E340 together coordinate substrate.

This sequence belongs to the mandelate racemase/muconate lactonizing enzyme family. GalD subfamily. Mg(2+) serves as cofactor.

The enzyme catalyses D-mannonate = 2-dehydro-3-deoxy-D-gluconate + H2O. It participates in carbohydrate metabolism; pentose and glucuronate interconversion. Its function is as follows. Catalyzes the dehydration of D-mannonate. Has no detectable activity with a panel of 70 other acid sugars (in vitro). This Sphingomonas sp. (strain SKA58) protein is D-mannonate dehydratase.